The sequence spans 888 residues: Protein translocase subunit SecA (888 aa).

Residues Gln-81, 99–103 (GEGKT), and Asp-489 each bind ATP.

This sequence belongs to the SecA family.

The protein resides in the plastid. The protein localises to the chloroplast stroma. Its subcellular location is the chloroplast thylakoid membrane. The enzyme catalyses ATP + H2O + cellular proteinSide 1 = ADP + phosphate + cellular proteinSide 2.. Its function is as follows. Has a central role in coupling the hydrolysis of ATP to the transfer of proteins across the thylakoid membrane. The chain is Protein translocase subunit SecA from Trieres chinensis (Marine centric diatom).